The following is a 333-amino-acid chain: Acetoin:2,6-dichlorophenolindophenol oxidoreductase subunit alpha (333 aa).

As to quaternary structure, tetramer of 2 alpha and 2 beta subunits. Requires thiamine diphosphate as cofactor.

It functions in the pathway ketone degradation; acetoin degradation. In terms of biological role, catalyzes the 2,6-dichlorophenolindophenol-dependent cleavage of acetoin into acetate and acetaldehyde. The alpha subunit is probably the catalytic subunit of the enzyme. The polypeptide is Acetoin:2,6-dichlorophenolindophenol oxidoreductase subunit alpha (acoA) (Bacillus subtilis (strain 168)).